The chain runs to 650 residues: Putative pumilio homolog 7, chloroplastic (650 aa).

2 disordered regions span residues 1 to 22 (MDEF…RTPL) and 200 to 235 (NDDK…GQEI). Residues 1-77 (MDEFREASSV…SPPFNGIIPK (77 aa)) constitute a chloroplast transit peptide. Composition is skewed to low complexity over residues 8-22 (SSVS…RTPL) and 217-232 (PSYS…YNNG). A PUM-HD domain is found at 308 to 650 (SNTRALMSNN…RIFSRNLLKK (343 aa)). 8 Pumilio repeats span residues 333–368 (DIQG…IIFN), 369–404 (EVIA…QIVL), 408–443 (EEPG…SLVK), 445–480 (ALRP…FIFD), 481–516 (AATK…KLIA), 517–552 (EISR…MMLA), 553–591 (QLKG…ELVS), and 594–625 (HFDQ…SLVE).

The protein localises to the plastid. The protein resides in the chloroplast. It is found in the cytoplasm. In terms of biological role, sequence-specific RNA-binding protein that regulates translation and mRNA stability by binding the 3'-UTR of target mRNAs. The protein is Putative pumilio homolog 7, chloroplastic (APUM7) of Arabidopsis thaliana (Mouse-ear cress).